A 79-amino-acid chain; its full sequence is DNA-directed RNA polymerase subunit omega (79 aa).

It belongs to the RNA polymerase subunit omega family. The RNAP catalytic core consists of 2 alpha, 1 beta, 1 beta' and 1 omega subunit. When a sigma factor is associated with the core the holoenzyme is formed, which can initiate transcription.

The catalysed reaction is RNA(n) + a ribonucleoside 5'-triphosphate = RNA(n+1) + diphosphate. Promotes RNA polymerase assembly. Latches the N- and C-terminal regions of the beta' subunit thereby facilitating its interaction with the beta and alpha subunits. This Thermotoga neapolitana (strain ATCC 49049 / DSM 4359 / NBRC 107923 / NS-E) protein is DNA-directed RNA polymerase subunit omega.